Reading from the N-terminus, the 288-residue chain is Alpha/beta hydrolase domain-containing protein 17B (288 aa).

Residues serine 170, aspartate 235, and histidine 264 each act as charge relay system in the active site.

The protein belongs to the AB hydrolase superfamily. ABHD17 family. Palmitoylated on cysteine residues located in a cysteine cluster at the N-terminus which promotes membrane localization.

The protein localises to the cell membrane. It localises to the recycling endosome membrane. It is found in the cell projection. Its subcellular location is the dendritic spine. The protein resides in the postsynaptic density membrane. The catalysed reaction is S-hexadecanoyl-L-cysteinyl-[protein] + H2O = L-cysteinyl-[protein] + hexadecanoate + H(+). Hydrolyzes fatty acids from S-acylated cysteine residues in proteins. Has depalmitoylating activity towards nras. The polypeptide is Alpha/beta hydrolase domain-containing protein 17B (Xenopus laevis (African clawed frog)).